Consider the following 603-residue polypeptide: Insulin-like growth factor-binding protein complex acid labile subunit (603 aa).

A signal peptide spans 1–23 (MALRTGGPALVVLLAFWVALGPC). The LRRNT domain maps to 32 to 74 (ASADAEGPQCPVACTCSHDDYTDELSVFCSSKNLTHLPDDIPV). 2 disulfide bridges follow: Cys-41–Cys-47 and Cys-45–Cys-60. 3 N-linked (GlcNAc...) asparagine glycosylation sites follow: Asn-64, Asn-85, and Asn-96. LRR repeat units lie at residues 75–96 (STRALWLDGNNLSSIPSAAFQN), 99–120 (SLDFLNLQGSWLRSLEPQALLG), 123–144 (NLYYLHLERNRLRNLAVGLFTH), 147–168 (SLASLSLSSNLLGRLEEGLFQG), 171–192 (HLWDLNLGWNSLVVLPDTVFQG), 195–216 (NLHELVLAGNKLTYLQPALFCG), 219–240 (ELRELDLSRNALRSVKANVFVH), 243–264 (RLQKLYLDRNLITAVAPGAFLG), 267–288 (ALRWLDLSHNRVAGLMEDTFPG), 291–312 (GLHVLRLAHNAIASLRPRTFKD), 315–336 (FLEELQLGHNRIRQLGERTFEG), 339–360 (QLEVLTLNDNQITEVRVGAFSG), 363–384 (NVAVMNLSGNCLRSLPERVFQG), 387–408 (KLHSLHLEHSCLGHVRLHTFAG), 411–432 (GLRRLFLRDNSISSIEEQSLAG), 435–456 (ELLELDLTTNRLTHLPRQLFQG), 459–480 (HLEYLLLSYNQLTTLSAEVLGP), 483–504 (RAFWLDISHNHLETLAEGLFSS), and 507–528 (RVRYLSLRNNSLQTFSPQPGLE). N-linked (GlcNAc...) asparagine glycosylation occurs at Asn-368. N-linked (GlcNAc...) asparagine glycosylation is present at Asn-515. The 69-residue stretch at 535–603 (NPWDCSCPLK…DVSETHFVHC (69 aa)) folds into the LRRCT domain. Disulfide bonds link Cys-539–Cys-581, Cys-541–Cys-603, and Cys-565–Cys-570. N-linked (GlcNAc...) asparagine glycans are attached at residues Asn-578 and Asn-586.

As to quaternary structure, forms a ternary complex with IGF1 and IGFBP3. Brain, kidney, lung, heart, spleen, muscle and liver.

The protein resides in the secreted. It is found in the extracellular space. Functionally, may have an important role in regulating the access of circulating IGFs to the tissues. The chain is Insulin-like growth factor-binding protein complex acid labile subunit (Igfals) from Rattus norvegicus (Rat).